Here is a 308-residue protein sequence, read N- to C-terminus: tRNA uridine(34) hydroxylase (308 aa).

A Rhodanese domain is found at 128-222 (ADENTVVVDT…YLEEVPREQS (95 aa)). Cys-182 (cysteine persulfide intermediate) is an active-site residue.

The protein belongs to the TrhO family.

The catalysed reaction is uridine(34) in tRNA + AH2 + O2 = 5-hydroxyuridine(34) in tRNA + A + H2O. Its function is as follows. Catalyzes oxygen-dependent 5-hydroxyuridine (ho5U) modification at position 34 in tRNAs. The protein is tRNA uridine(34) hydroxylase of Brucella suis biovar 1 (strain 1330).